The primary structure comprises 499 residues: Nuclear receptor-binding protein 2 (499 aa).

The interval 1–31 is disordered; that stretch reads MAAPEPAPRRGREREREDESEDESDILEESP. Positions 7 to 17 are enriched in basic and acidic residues; sequence APRRGRERERE. A compositionally biased stretch (acidic residues) spans 18–28; it reads DESEDESDILE. Residues 36–304 enclose the Protein kinase domain; the sequence is QKRREQVNQG…AHNLLFHRVL (269 aa). Residues 396-416 form a disordered region; that stretch reads APPPEEAQKAKTPTPEPFDSE. Residues Thr407 and Thr409 each carry the phosphothreonine modification.

This sequence belongs to the protein kinase superfamily. Ser/Thr protein kinase family. As to expression, expressed in Purkinje cells of the cerebellum and neurons in the CA3 region of the hippocampus. Also detected in non-neural tissues including mesenchymal layer adjacent to epithelium in developing bronchi of the lung, the epithelium of the stomach as well as cells in the liver.

The protein localises to the cytoplasm. May regulate apoptosis of neural progenitor cells during their differentiation. The chain is Nuclear receptor-binding protein 2 from Mus musculus (Mouse).